The following is a 385-amino-acid chain: MNITEGVVELTVPAARDGADAGVGDDVFYNPTQELNRDITVAALRAYQEREPRAETYLDAMTASGVRGVRAAASGYDVTCTDIDPDAVALAQSNLEKNDLDGQTLPSDANAVLHQSGPESPLGPEAIFDVVDLDPFGTPIPFADAAFANARNLVCVTATDTAPLCGAHQQSGIRTYSTLPRNTEYHPEMGLRVLLSALIRTAARYDTAAIPILSHVTRHYVRTYLELDTRATRADELLSDLGYVYHCEDCLTRQHEFGHIAHPPSMCHHCEGNRVITAGPLYLGSIREQGFTRRVRNHITTEMGEIKQADSILKMVENELETPTHYDQHRLCKKWTRSAIGMDEFIEQLHTAGFDATRTHYSGTAFKTNATIAEIRSATTDPDEQ.

A Trm1 methyltransferase domain is found at 1 to 379 (MNITEGVVEL…ATIAEIRSAT (379 aa)). S-adenosyl-L-methionine-binding residues include Arg37, Arg67, Asp82, Asp108, and Ala109. Positions 247, 250, 267, and 270 each coordinate Zn(2+).

The protein belongs to the class I-like SAM-binding methyltransferase superfamily. Trm1 family.

The enzyme catalyses guanosine(26) in tRNA + 2 S-adenosyl-L-methionine = N(2)-dimethylguanosine(26) in tRNA + 2 S-adenosyl-L-homocysteine + 2 H(+). In terms of biological role, dimethylates a single guanine residue at position 26 of a number of tRNAs using S-adenosyl-L-methionine as donor of the methyl groups. This is tRNA (guanine(26)-N(2))-dimethyltransferase from Haloquadratum walsbyi (strain DSM 16790 / HBSQ001).